A 246-amino-acid chain; its full sequence is ATP synthase subunit a, chloroplastic (246 aa).

Helical transmembrane passes span 35 to 55 (AQVLITSWIVIGLILGLTFLA), 94 to 114 (IPFIGTMFLFIFVSNWSGALI), 132 to 152 (DINTTVALALLTSVAYFYAGL), 198 to 218 (LVVAVLVSLVPLVVPIPMMFL), and 219 to 239 (GLFTSAIQALIFATLAAAYIG).

This sequence belongs to the ATPase A chain family. F-type ATPases have 2 components, CF(1) - the catalytic core - and CF(0) - the membrane proton channel. CF(1) has five subunits: alpha(3), beta(3), gamma(1), delta(1), epsilon(1). CF(0) has four main subunits: a, b, b' and c.

It localises to the plastid. The protein localises to the chloroplast thylakoid membrane. Its function is as follows. Key component of the proton channel; it plays a direct role in the translocation of protons across the membrane. This chain is ATP synthase subunit a, chloroplastic, found in Chara vulgaris (Common stonewort).